A 467-amino-acid polypeptide reads, in one-letter code: UDP-N-acetylmuramate--L-alanine ligase (467 aa).

Residue 112-118 (GTHGKTT) coordinates ATP.

Belongs to the MurCDEF family.

It is found in the cytoplasm. The catalysed reaction is UDP-N-acetyl-alpha-D-muramate + L-alanine + ATP = UDP-N-acetyl-alpha-D-muramoyl-L-alanine + ADP + phosphate + H(+). It participates in cell wall biogenesis; peptidoglycan biosynthesis. Functionally, cell wall formation. The polypeptide is UDP-N-acetylmuramate--L-alanine ligase (Azoarcus sp. (strain BH72)).